The primary structure comprises 519 residues: Keratin, type II cytoskeletal 1b (519 aa).

The interval 1 to 166 (MSRQFSSQSA…DPEIQKIKTQ (166 aa)) is head. Residues Arg81 and Arg95 each carry the omega-N-methylarginine modification. A coil 1A region spans residues 167-202 (EREQIKTLNNKFASFIDKVRFLEQQNQVLQTKWELL). The 314-residue stretch at 167-480 (EREQIKTLNN…ELLEGEESRM (314 aa)) folds into the IF rod domain. The interval 203–221 (QQVNTSTRTSSLEPIFEEF) is linker 1. Residues 222 to 313 (INQLQRQVDV…YLFDTELSQI (92 aa)) form a coil 1B region. Positions 314 to 337 (QTHVSDTNVILSMDNNRSLDLDSI) are linker 12. The interval 338–476 (INAVRTQYEL…ATYRELLEGE (139 aa)) is coil 2. The segment at 477 to 519 (ESRMSGALQSQVSIWALPSNEGNDLGERLHDPQSQVPVPKLGC) is tail. The segment at 499-519 (NDLGERLHDPQSQVPVPKLGC) is disordered.

It belongs to the intermediate filament family. Undergoes deimination of some arginine residues (citrullination).

This Rattus norvegicus (Rat) protein is Keratin, type II cytoskeletal 1b (Krt77).